Here is a 238-residue protein sequence, read N- to C-terminus: Chorionic somatomammotropin hormone 2 (238 aa).

An N-terminal signal peptide occupies residues 1–36 (MAPAPSFRGHQWTYNPVRGSCLLLLLVVSNLLLCQG). Residue histidine 66 participates in Zn(2+) binding. 4 N-linked (GlcNAc...) asparagine glycosylation sites follow: asparagine 70, asparagine 92, asparagine 146, and asparagine 160. A disulfide bridge links cysteine 97 with cysteine 215. Zn(2+) is bound at residue aspartate 224. Residues cysteine 232 and cysteine 238 are joined by a disulfide bond.

This sequence belongs to the somatotropin/prolactin family.

The protein resides in the secreted. This Bos taurus (Bovine) protein is Chorionic somatomammotropin hormone 2 (CSH2).